Here is a 116-residue protein sequence, read N- to C-terminus: uncharacterized protein (116 aa).

2 helical membrane passes run 55–77 (LSYS…LYSF) and 87–109 (FSYG…YAAL).

It localises to the membrane. This is an uncharacterized protein from Saccharomyces cerevisiae (strain ATCC 204508 / S288c) (Baker's yeast).